A 503-amino-acid polypeptide reads, in one-letter code: MKLRAQPYDIEVGRYEVIINSADAEELGVLAGDRVQVKDKDTITAVVETTDAIVSPGKIGIYREAWESIKVVPDEVVEVLPAAKPKSVSFIRKKMDKQKLTSEEMHAIIEDIVDGNLTEVELTAFVTASYIYTMDSDEIEWMTRAMVKTGDQISFDVHPVMDHHSIGGVPGNKISLCIVPIIAAAGLLIPKTSSRAITGAGGSADLMEILCPVSFRADEIKKMTTKVGGCLVWGGATNIAPADDKIINVEYPLSIDPKSQLLASVMAKKFAVGADTMVLDIPCGNETKIPTVQEGRKLARDFMELGDRLGMKIECALTYGGTPLGRAIGGGVEVREAMVMLEKFEGPRSLLEKTIAISGMMLEMGGVAPKNEGAKMAVELVKSGKALQKFKEIIEVQGGDPKVTSDMVPIGDKVATVLSPQDGYVLEISNKRLVYMCRLAGAPHDKGVGVILHKKKGEYVKKGDGLFTLYADKEWKLDAAIKESLRNPIMMVEGMILEKIEVV.

AMP contacts are provided by residues G168, 194-199 (SRAITG), and S203. D256 serves as the catalytic Proton donor. Positions 264 and 288 each coordinate AMP.

The protein belongs to the thymidine/pyrimidine-nucleoside phosphorylase family. Type 2 subfamily.

The catalysed reaction is AMP + phosphate = alpha-D-ribose 1,5-bisphosphate + adenine. It catalyses the reaction CMP + phosphate = cytosine + alpha-D-ribose 1,5-bisphosphate. It carries out the reaction UMP + phosphate = alpha-D-ribose 1,5-bisphosphate + uracil. In terms of biological role, catalyzes the conversion of AMP and phosphate to adenine and ribose 1,5-bisphosphate (R15P). Exhibits phosphorylase activity toward CMP and UMP in addition to AMP. Functions in an archaeal AMP degradation pathway, together with R15P isomerase and RubisCO. In Methanocella arvoryzae (strain DSM 22066 / NBRC 105507 / MRE50), this protein is AMP phosphorylase.